Consider the following 375-residue polypeptide: Metal tolerance protein B (375 aa).

Residues 1-57 (MELEQICILKPDDEEEMESPSPSKTEENLGVVPLSCAFTRQEHCVSETKEREESTRR) lie on the Cytoplasmic side of the membrane. Residues 58–78 (LSSLIFLYLIVMSVQIVGGFK) traverse the membrane as a helical segment. At 79–84 (ANSLAV) the chain is on the vacuolar side. A helical membrane pass occupies residues 85-105 (MTDAAHLLSDVAGLCVSLLAI). The Cytoplasmic portion of the chain corresponds to 106 to 122 (KVSSWEANPRNSFGFKR). Residues 123–143 (LEVLAAFLSVQLIWLVSGVII) traverse the membrane as a helical segment. The Vacuolar segment spans residues 144 to 160 (HEAIQRLLSRSREVNGE). A helical membrane pass occupies residues 161–181 (IMFGISAFGFFMNLVMVLWLG). The tract at residues 182–206 (HNHSHHHHDHHHHHHNHKHQHQHHH) is required for zinc-binding. Residues 182–240 (HNHSHHHHDHHHHHHNHKHQHQHHHKEVVAEEEEEEMNPLKGEKSSSKEMNINIQGAYL) are Cytoplasmic-facing. A helical membrane pass occupies residues 241–261 (HAMADMIQSLGVMIGGGIIWV). The Vacuolar segment spans residues 262 to 264 (KPK). Residues 265-285 (WVLVDLICTLVFSAFALAATL) form a helical membrane-spanning segment. The Cytoplasmic portion of the chain corresponds to 286–375 (PILKNIFGIL…YHATVQVESE (90 aa)).

Belongs to the cation diffusion facilitator (CDF) transporter (TC 2.A.4) family. SLC30A subfamily.

The protein localises to the vacuole membrane. Its function is as follows. Involved in sequestration of excess zinc in the cytoplasm into vacuoles to maintain zinc homeostasis. This Arabidopsis thaliana (Mouse-ear cress) protein is Metal tolerance protein B (MTPB).